A 207-amino-acid polypeptide reads, in one-letter code: Large ribosomal subunit protein uL4 (207 aa).

Belongs to the universal ribosomal protein uL4 family. As to quaternary structure, part of the 50S ribosomal subunit.

Its function is as follows. One of the primary rRNA binding proteins, this protein initially binds near the 5'-end of the 23S rRNA. It is important during the early stages of 50S assembly. It makes multiple contacts with different domains of the 23S rRNA in the assembled 50S subunit and ribosome. Forms part of the polypeptide exit tunnel. This is Large ribosomal subunit protein uL4 from Geobacter sulfurreducens (strain ATCC 51573 / DSM 12127 / PCA).